The sequence spans 159 residues: Putative pre-16S rRNA nuclease (159 aa).

Belongs to the YqgF nuclease family.

The protein localises to the cytoplasm. Functionally, could be a nuclease involved in processing of the 5'-end of pre-16S rRNA. The sequence is that of Putative pre-16S rRNA nuclease from Bartonella henselae (strain ATCC 49882 / DSM 28221 / CCUG 30454 / Houston 1) (Rochalimaea henselae).